The chain runs to 73 residues: Conotoxin Gla(3)-TxVI (73 aa).

The signal sequence occupies residues 1 to 19 (MQKLIILLLVAAVLMSAQA). Positions 20 to 44 (VLQEKRPKEKIKFLSKRKTDAEKQQ) are excised as a propeptide. 3 disulfide bridges follow: Cys-48/Cys-62, Cys-55/Cys-66, and Cys-61/Cys-71. Pro-49 carries the 4-hydroxyproline modification. Residue Glu-53 is modified to 4-carboxyglutamate; partial. Residue Pro-54 is modified to 4-hydroxyproline. Position 60 is a 4-carboxyglutamate (Glu-60). 6'-bromotryptophan is present on Trp-64.

This sequence belongs to the conotoxin O2 superfamily. As to expression, expressed by the venom duct.

It is found in the secreted. This chain is Conotoxin Gla(3)-TxVI, found in Conus textile (Cloth-of-gold cone).